Consider the following 64-residue polypeptide: Large ribosomal subunit protein uL29 (64 aa).

The protein belongs to the universal ribosomal protein uL29 family.

In Verminephrobacter eiseniae (strain EF01-2), this protein is Large ribosomal subunit protein uL29.